Consider the following 1339-residue polypeptide: MEGGSELLFYVNGRKVTEKNVDPETMLLPYLRKKLRLTGTKYGCGGGGCGACTVMISRYNPITKKIRHYPANACLTPICSLYGAAVTTVEGIGSTKTRIHPVQERIAKCHGTQCGFCTPGMVMSLYTLLRNHPEPTLTQLNDALGGNLCRCTGYRPIINACKTFCKTSGCCQSKENGVCCLDQGMNGLPEFEEGNETSLKLFSEEEFLPLDPTQELIFPPELMTMAEKKTQKTRIFGSDRMTWISPVTLKELLEAKVKYPQAPVVMGNTSVGPDMKFKGIFHPVIISPDRIEELSVVNYTDNGLTLGAAVSLAEVKDILANVTRKLPEEKTQMYHALLKHLETLAGPQIRNMASLGGHIVSRHPDSDLNPLLAVGNCTLNLLSKEGRRQIPLNEQFLRKCPSADLKPEEILISVNIPYSRKWEFVSAFRQAQRQQNALAIVNSGMRVCFGKGDGIIRELSIAYGGVGPTTILANNSCQKLIGRPWNEEMLDAACRLILDEVSLPGSAPGGRVEFKRTLIVSFLFKFYLEVSQILKGMDLVHYPSLASKYESALEDLHSRHYWSTLKYQNADLKQLSQDPIGHPIMHLSGIKHATGEAIYCDDMPVVDRELFLTFVTSSRAHAKIVSIDVSAALSLPGVVDILTGEHLPGINTTFGFLTDADQLLSTDEVSCVGQLVCAVIADSEVQARRAAQQVKIVYQDLEPVILTIEEAIQNKSFFEPERKLEYGNVDEAFKMVDQILEGEIHMGGQEHFYMETQSMLVVPKGEDREIDVYVSAQFPKYIQDITASVLKVSANKVMCHVKRVGGAFGGKVTKTGVLAAITAFAANKHGRPVRCILERGEDILITGGRHPYLGKYKAGFMNDGRILALDMEHYNNAGAFLDESLFVIEMGLLKLENAYKFPNLRCRGWACRTNLPSNTALRGFGFPQAGLITEACITEVAAKCGLPPEKVRMINMYKEIDQTPYKQEINTKNLTQCWKECMATSSYTLRKAAVEKFNSENYWKKKGLAMVPLKYPIGLGSVAAGQAAALVHIYLDGSVLVTHGGIEMGQGVHTKMIQVVSRELRMPLSSIHLRGTSTETIPNTNPSGGSVVADLNGLAVKDACQTLLKRLKPIISKNPKGTWKDWAQAAFNESISLSATGYFRGYESNINWETGEGHPFEYFVYGAACSEVEIDCLTGAHKNIRTDIVMDVGYSINPALDVGQIEGAFIQGMGLYTIEELNYSPQGVLYTRGPNQYKIPAICDIPMELHISFLPPSENSNTLYSSKGLGESGIFLGCSVFFAIHDAIRAARQERGLPGPLRLNSPLTPEKIRMACEDKFTKMIPRDEPGSYVPWSVPI.

A 2Fe-2S ferredoxin-type domain is found at 5–92 (SELLFYVNGR…GAAVTTVEGI (88 aa)). [2Fe-2S] cluster is bound by residues Cys-44, Cys-49, Cys-52, and Cys-74. Position 113 (Gln-113) interacts with Mo-molybdopterin. Positions 114, 117, 149, and 151 each coordinate [2Fe-2S] cluster. Mo-molybdopterin is bound at residue Cys-151. The FAD-binding PCMH-type domain maps to 236-421 (FGSDRMTWIS…ISVNIPYSRK (186 aa)). Residues 264 to 271 (VVMGNTSV), Ala-345, Ser-354, His-358, Asp-367, and Leu-411 each bind FAD. Mo-molybdopterin-binding positions include 807–808 (AF) and Met-1048. The residue at position 1069 (Ser-1069) is a Phosphoserine. Mo-molybdopterin is bound by residues 1089 to 1092 (GSVV), Gln-1204, and Leu-1269. Glu-1271 (proton acceptor; for azaheterocycle hydroxylase activity) is an active-site residue.

Belongs to the xanthine dehydrogenase family. Homodimer. The cofactor is [2Fe-2S] cluster. It depends on FAD as a cofactor. Mo-molybdopterin serves as cofactor. In terms of processing, the N-terminus is blocked. As to expression, expressed at high levels in liver, lung and spleen. Also expressed in kindey, eye, testis, duodenum, esophagus and thymus (at protein level).

It localises to the cytoplasm. The enzyme catalyses an aldehyde + O2 + H2O = a carboxylate + H2O2 + H(+). The catalysed reaction is retinal + O2 + H2O = retinoate + H2O2 + H(+). Oxidase with broad substrate specificity, oxidizing aromatic azaheterocycles, such as N1-methylnicotinamide, N-methylphthalazinium and phthalazine, as well as aldehydes, such as benzaldehyde, retinal, pyridoxal, and vanillin. Plays a key role in the metabolism of xenobiotics and drugs containing aromatic azaheterocyclic substituents. Is probably involved in the regulation of reactive oxygen species homeostasis. May be a prominent source of superoxide generation via the one-electron reduction of molecular oxygen. May also catalyze nitric oxide (NO) production via the reduction of nitrite to NO with NADH or aldehyde as electron donor. May play a role in adipogenesis. This is Aldehyde oxidase 1 from Bos taurus (Bovine).